The following is a 416-amino-acid chain: UDP-N-acetylglucosamine 1-carboxyvinyltransferase (416 aa).

A phosphoenolpyruvate-binding site is contributed by 22-23 (KN). R92 lines the UDP-N-acetyl-alpha-D-glucosamine pocket. The active-site Proton donor is the C116. C116 is subject to 2-(S-cysteinyl)pyruvic acid O-phosphothioketal. UDP-N-acetyl-alpha-D-glucosamine is bound by residues 121 to 125 (RPVDQ), D304, and I326.

It belongs to the EPSP synthase family. MurA subfamily.

Its subcellular location is the cytoplasm. The catalysed reaction is phosphoenolpyruvate + UDP-N-acetyl-alpha-D-glucosamine = UDP-N-acetyl-3-O-(1-carboxyvinyl)-alpha-D-glucosamine + phosphate. It participates in cell wall biogenesis; peptidoglycan biosynthesis. Its function is as follows. Cell wall formation. Adds enolpyruvyl to UDP-N-acetylglucosamine. The sequence is that of UDP-N-acetylglucosamine 1-carboxyvinyltransferase from Cupriavidus taiwanensis (strain DSM 17343 / BCRC 17206 / CCUG 44338 / CIP 107171 / LMG 19424 / R1) (Ralstonia taiwanensis (strain LMG 19424)).